We begin with the raw amino-acid sequence, 477 residues long: MEWEPVIGLEVHVQLRTQSKIFSGAATAYGAEPNTQACAIDLGLPGVLPVLNKEAVKLAVCFGLSVNASIPPYSIFARKNYFYPDLPKGYQISQYNFPIVQNGHLDIENEDGTTKRIGITRAHLEEDAGKSFHEGMQGYSGIDFNRAGTPLLEIVSEPDIRSAQEAVAYLKALHSLVRYIGVSDANMQEGAFRCDVNISLRPKGEEKFGTRAEIKNVNSFRFVERAILFEINRQKEILENGGTIVQETRLYDAVQDETRSMRTKEEAHDYRYFPDPDLLPVEIGPEFIEAVKNQLPELPWEKRKRFAASYQLSNYDVKLLTTQIEIANYFETVLKIDKTIPPKLAANWINGDLAAALNKNNLSITQSPINAEQLASLLHRIADNTLSGSMGKQVFETMWGGEGDADTIIERHGLKQITDTEALEKIIDEVIENNPTQVEQYRSGKDKLIAFFVGQVMKATKGKANPQQVNELFKKKL.

It belongs to the GatB/GatE family. GatB subfamily. In terms of assembly, heterotrimer of A, B and C subunits.

It catalyses the reaction L-glutamyl-tRNA(Gln) + L-glutamine + ATP + H2O = L-glutaminyl-tRNA(Gln) + L-glutamate + ADP + phosphate + H(+). The catalysed reaction is L-aspartyl-tRNA(Asn) + L-glutamine + ATP + H2O = L-asparaginyl-tRNA(Asn) + L-glutamate + ADP + phosphate + 2 H(+). Functionally, allows the formation of correctly charged Asn-tRNA(Asn) or Gln-tRNA(Gln) through the transamidation of misacylated Asp-tRNA(Asn) or Glu-tRNA(Gln) in organisms which lack either or both of asparaginyl-tRNA or glutaminyl-tRNA synthetases. The reaction takes place in the presence of glutamine and ATP through an activated phospho-Asp-tRNA(Asn) or phospho-Glu-tRNA(Gln). The polypeptide is Aspartyl/glutamyl-tRNA(Asn/Gln) amidotransferase subunit B (Coxiella burnetii (strain CbuG_Q212) (Coxiella burnetii (strain Q212))).